The chain runs to 224 residues: Jacalin-related lectin 24 (224 aa).

The Jacalin-type lectin domain maps to 8-160 (MFKVGPIGSK…LTSIGIYVYP (153 aa)).

Belongs to the jacalin lectin family.

This chain is Jacalin-related lectin 24 (JAL24), found in Arabidopsis thaliana (Mouse-ear cress).